The following is a 112-amino-acid chain: Nitrogenase-stabilizing/protective protein NifW (112 aa).

It belongs to the NifW family. As to quaternary structure, homotrimer; associates with NifD.

May protect the nitrogenase Fe-Mo protein from oxidative damage. The protein is Nitrogenase-stabilizing/protective protein NifW of Burkholderia vietnamiensis (strain G4 / LMG 22486) (Burkholderia cepacia (strain R1808)).